Here is a 648-residue protein sequence, read N- to C-terminus: MGVLARIQGPDDLRQLSHAEMTELADEIREFLVLKVAATGGHLGPNLGVVELTLALHRIFDSPQDAIIFDTGHQAYVHKILTGRQDQFDTLRKQGGLSGYPCRAESEHDWVESSHASAALSYADGLAKAFALTGQNRHVVAVVGDGALTGGMCWEALNNIAAGKDRSVVIVVNDNGRSYAPTIGGLADHLSALRTAPSYERALDSGRRMVKRLPWVGRTAYSVLHGMKAGLKDAVSPQVMFTDLGIKYLGPVDGHDEAAMESALRRAKAYGGPVIVHAVTRKGNGYAHAENDVADQMHATGVIDPVTGRGTKSSAPDWTSVFSAALIEQASRREDIVAITAAMAGPTGLAAFGEKFPDRIFDVGIAEQHAMTSAAGLALGGLHPVVAIYSTFLNRAFDQLLMDVALLKQPVTVVLDRAGVTGVDGASHNGVWDLSLLGIIPGIRVAAPRDADTLREELDEALLVDDGPTVVRFPKGAVPEAIPAVKRLDGMVDVLKASEGERGDVLLVAVGPFASLALEIAERLDKQGISVAVVDPRWVLPVADSLVKMADKYALVVTIEDGGLHGGIGSTVSAAMRAAGVHTSCRDMGVPQQFLDHASREAIHKELGLTAQDLSRKITGWVAGMGSVGVHVQEDASSASAQGEVAQG.

Thiamine diphosphate contacts are provided by residues His73 and 114–116 (SHA). A Mg(2+)-binding site is contributed by Asp145. Thiamine diphosphate-binding positions include 146-147 (GA), Asn175, Tyr286, and Glu367. Asn175 serves as a coordination point for Mg(2+).

Belongs to the transketolase family. DXPS subfamily. Homodimer. It depends on Mg(2+) as a cofactor. Thiamine diphosphate serves as cofactor.

It carries out the reaction D-glyceraldehyde 3-phosphate + pyruvate + H(+) = 1-deoxy-D-xylulose 5-phosphate + CO2. It functions in the pathway metabolic intermediate biosynthesis; 1-deoxy-D-xylulose 5-phosphate biosynthesis; 1-deoxy-D-xylulose 5-phosphate from D-glyceraldehyde 3-phosphate and pyruvate: step 1/1. Functionally, catalyzes the acyloin condensation reaction between C atoms 2 and 3 of pyruvate and glyceraldehyde 3-phosphate to yield 1-deoxy-D-xylulose-5-phosphate (DXP). The chain is 1-deoxy-D-xylulose-5-phosphate synthase from Rhodococcus erythropolis (strain PR4 / NBRC 100887).